A 147-amino-acid chain; its full sequence is Ubiquitin-conjugating enzyme E2 D2B (147 aa).

A UBC core domain is found at 1–147 (MALKRIHKEL…AREWTQKYAM (147 aa)). The active-site Glycyl thioester intermediate is the C85.

Belongs to the ubiquitin-conjugating enzyme family. In terms of assembly, interacts with CNOT4 (via RING domain). Testis-specific. Mainly expressed in the round spermatids (at protein level).

It catalyses the reaction S-ubiquitinyl-[E1 ubiquitin-activating enzyme]-L-cysteine + [E2 ubiquitin-conjugating enzyme]-L-cysteine = [E1 ubiquitin-activating enzyme]-L-cysteine + S-ubiquitinyl-[E2 ubiquitin-conjugating enzyme]-L-cysteine.. It functions in the pathway protein modification; protein ubiquitination. In terms of biological role, catalyzes the covalent attachment of ubiquitin to other proteins. Mediates the selective degradation of short-lived and abnormal proteins. Functions in the E6/E6-AP-induced ubiquitination of p53/TP53. Mediates ubiquitination of PEX5 and SQSTM1 and autoubiquitination of STUB1 and TRAF6. Involved in the signal-induced conjugation and subsequent degradation of NFKBIA, FBXW2-mediated GCM1 ubiquitination and degradation, MDM2-dependent degradation of p53/TP53 and the activation of MAVS in the mitochondria by RIGI in response to viral infection Plays a role in early maturation of the testis. This is Ubiquitin-conjugating enzyme E2 D2B (Ube2d2b) from Rattus norvegicus (Rat).